We begin with the raw amino-acid sequence, 264 residues long: 5'-nucleotidase SurE (264 aa).

D10, D11, S43, and N99 together coordinate a divalent metal cation.

This sequence belongs to the SurE nucleotidase family. The cofactor is a divalent metal cation.

The protein resides in the cytoplasm. It catalyses the reaction a ribonucleoside 5'-phosphate + H2O = a ribonucleoside + phosphate. In terms of biological role, nucleotidase that shows phosphatase activity on nucleoside 5'-monophosphates. This Methanococcus maripaludis (strain C5 / ATCC BAA-1333) protein is 5'-nucleotidase SurE.